The primary structure comprises 488 residues: Glutamyl-tRNA(Gln) amidotransferase subunit A (488 aa).

Catalysis depends on charge relay system residues K77 and S152. S176 functions as the Acyl-ester intermediate in the catalytic mechanism.

The protein belongs to the amidase family. GatA subfamily. In terms of assembly, heterotrimer of A, B and C subunits.

It catalyses the reaction L-glutamyl-tRNA(Gln) + L-glutamine + ATP + H2O = L-glutaminyl-tRNA(Gln) + L-glutamate + ADP + phosphate + H(+). Its function is as follows. Allows the formation of correctly charged Gln-tRNA(Gln) through the transamidation of misacylated Glu-tRNA(Gln) in organisms which lack glutaminyl-tRNA synthetase. The reaction takes place in the presence of glutamine and ATP through an activated gamma-phospho-Glu-tRNA(Gln). The chain is Glutamyl-tRNA(Gln) amidotransferase subunit A from Streptococcus pyogenes serotype M49 (strain NZ131).